The chain runs to 244 residues: Small ribosomal subunit protein uS3 (244 aa).

Residues 38-106 (IRKYLNARLA…EVQINIFEVK (69 aa)) enclose the KH type-2 domain. Basic and acidic residues predominate over residues 222–235 (TGRRNDNAGGNRDK). Positions 222–244 (TGRRNDNAGGNRDKNFKRKRANR) are disordered.

It belongs to the universal ribosomal protein uS3 family. Part of the 30S ribosomal subunit. Forms a tight complex with proteins S10 and S14.

In terms of biological role, binds the lower part of the 30S subunit head. Binds mRNA in the 70S ribosome, positioning it for translation. This is Small ribosomal subunit protein uS3 from Parabacteroides distasonis (strain ATCC 8503 / DSM 20701 / CIP 104284 / JCM 5825 / NCTC 11152).